We begin with the raw amino-acid sequence, 683 residues long: UvrABC system protein B (683 aa).

The disordered stretch occupies residues 1 to 29 (MTDTGPLQPDRPDLDRPLSVDAPFEPAGD). Residues 39–417 (AGFESGAEKQ…PGDYERDHSE (379 aa)) form the Helicase ATP-binding domain. 52-59 (GVTGSGKT) lines the ATP pocket. The Beta-hairpin signature appears at 105–128 (YYDYYQPEAYVEQTDTYIDKDMSI). Residues 442 to 604 (QVEDLIERIQ…EPRTIEKPVS (163 aa)) form the Helicase C-terminal domain. Positions 587 to 603 (EFNAEHGHEPRTIEKPV) are enriched in basic and acidic residues. The disordered stretch occupies residues 587-620 (EFNAEHGHEPRTIEKPVSETNLPGSSTDTDGVAD). Polar residues predominate over residues 604-615 (SETNLPGSSTDT). Positions 630–665 (EQLIERLETRMQEAADNLEFELAADIRDRIRELRET) constitute a UVR domain.

This sequence belongs to the UvrB family. Forms a heterotetramer with UvrA during the search for lesions. Interacts with UvrC in an incision complex.

The protein resides in the cytoplasm. In terms of biological role, the UvrABC repair system catalyzes the recognition and processing of DNA lesions. A damage recognition complex composed of 2 UvrA and 2 UvrB subunits scans DNA for abnormalities. Upon binding of the UvrA(2)B(2) complex to a putative damaged site, the DNA wraps around one UvrB monomer. DNA wrap is dependent on ATP binding by UvrB and probably causes local melting of the DNA helix, facilitating insertion of UvrB beta-hairpin between the DNA strands. Then UvrB probes one DNA strand for the presence of a lesion. If a lesion is found the UvrA subunits dissociate and the UvrB-DNA preincision complex is formed. This complex is subsequently bound by UvrC and the second UvrB is released. If no lesion is found, the DNA wraps around the other UvrB subunit that will check the other stand for damage. This chain is UvrABC system protein B, found in Natronomonas pharaonis (strain ATCC 35678 / DSM 2160 / CIP 103997 / JCM 8858 / NBRC 14720 / NCIMB 2260 / Gabara) (Halobacterium pharaonis).